We begin with the raw amino-acid sequence, 614 residues long: MKDSLVLKTIQEKIKNLGSLPGCYLWKNELGQVIYVGKALKLQSRVRSYLNPNQKDRKTRALFVELYDLDWIATGTEKEALLLEATLIKKYNPKFNVRLKDDKKYPFLCVSTSEDYPMVFLTRKVKDNGDRYFGPFTDVKAARDTLELIHRIFPIRKTKLKLPLPKPQRPCLNFHMGRCLGPCQGNVTKDTYSELVDEILRFLEGKKERLVADLKKAMMDASSKMEYERAGFLKQRIEKINQLREKQTVVSMDGGDEDILGISKREDEGQILILEVRGGRLEGKKSFPLTGLSFSDDEEAFTSFLRDYYLNVTVLPSVVYLPTSAKGNYDVFLEAILEKFGTSIKLKFPEMGPKKSLLRLAEKNADLSLTERILATKLRDQTVAMKELQEKLNLPTLPRTIECYDISHFQGSLPVASGVMFVEGKPYKPGYRHYKMRGYEGINDPGMIHEVIARRLSHLVNEEEPLPDLIVIDGGLTQLSRAAEAANALDLGHIPMVGLAKKREEIYFPGEKHPYSFDQHSPMMRLLRNLRDEAHRFGVTFQRLQRKKKALKSILDDIPDIGASRRKSILMYFQAKKKVTDATRQELEKVQGIGPVLAEKIFTNIQNLKKIEPK.

The region spanning 19–97 is the GIY-YIG domain; the sequence is SLPGCYLWKN…IKKYNPKFNV (79 aa). A UVR domain is found at 208–243; that stretch reads ERLVADLKKAMMDASSKMEYERAGFLKQRIEKINQL.

It belongs to the UvrC family. Interacts with UvrB in an incision complex.

The protein resides in the cytoplasm. The UvrABC repair system catalyzes the recognition and processing of DNA lesions. UvrC both incises the 5' and 3' sides of the lesion. The N-terminal half is responsible for the 3' incision and the C-terminal half is responsible for the 5' incision. This chain is UvrABC system protein C, found in Leptospira biflexa serovar Patoc (strain Patoc 1 / Ames).